The sequence spans 123 residues: Defensin beta 118 (123 aa).

The first 19 residues, Met-1–Pro-19, serve as a signal peptide directing secretion. Cystine bridges form between Cys-27–Cys-54, Cys-34–Cys-48, and Cys-38–Cys-55. A propeptide spanning residues Val-65 to Ser-123 is cleaved from the precursor. Residues Lys-100–Arg-110 show a composition bias toward basic and acidic residues. The segment at Lys-100–Ser-123 is disordered. The span at Thr-112–Ser-123 shows a compositional bias: polar residues.

Belongs to the beta-defensin family. The three-dimensional structure formed by the three intramolecular disulfide bridges is indispensable for antimicrobial activity.

It is found in the secreted. Its function is as follows. Host defense peptide that exhibits antimicrobial activity against both Gram-negative bacteria, such as E.coli and S.typhimurium, and Gram-positive bacteria, such as S.aureus and B.subtilis. Inhibits cell adhesion of E.coli on intestinal epithelial enterocytes. Causes rapid permeabilization of both the outer and inner membrane of E.coli, leading to morphological alterations on the bacterial surface. Binds to bacterial lipopolysaccharides (LPS) with high affinity, and may thereby be involved in immunoregulation through LPS neutralization. May contribute to epididymal innate immunity and protect the sperm against attack by microorganisms. The polypeptide is Defensin beta 118 (DEFB118) (Gorilla gorilla gorilla (Western lowland gorilla)).